We begin with the raw amino-acid sequence, 447 residues long: Phosphoglucosamine mutase (447 aa).

Ser104 acts as the Phosphoserine intermediate in catalysis. Mg(2+) contacts are provided by Ser104, Asp243, Asp245, and Asp247. Ser104 is modified (phosphoserine).

It belongs to the phosphohexose mutase family. The cofactor is Mg(2+). Activated by phosphorylation.

It carries out the reaction alpha-D-glucosamine 1-phosphate = D-glucosamine 6-phosphate. In terms of biological role, catalyzes the conversion of glucosamine-6-phosphate to glucosamine-1-phosphate. In Corynebacterium glutamicum (strain R), this protein is Phosphoglucosamine mutase.